Reading from the N-terminus, the 324-residue chain is Histidine N-acetyltransferase (324 aa).

Positions 15 to 151 (FEFVLAAEKE…GILLLSFNAP (137 aa)) constitute an N-acetyltransferase domain.

The catalysed reaction is L-histidine + acetyl-CoA = N(alpha)-acetyl-L-histidine + CoA + H(+). In terms of biological role, enzyme responsible for the N-acetyl-histidine (NAH) synthesis, which is a major constituent of brain and lens of ectothermic vertebrates. The polypeptide is Histidine N-acetyltransferase (hisat) (Xenopus tropicalis (Western clawed frog)).